A 62-amino-acid chain; its full sequence is ATP synthase subunit J, mitochondrial (62 aa).

The helical transmembrane segment at 13 to 32 (IVKPLWPYAVGGVITFFLFA) threads the bilayer.

In terms of assembly, F-type ATP synthases have 2 components, the catalytic core F(1) and the membrane-embedded component F(0), linked together by a central stalk and a peripheral stalk. The central stalk, also called rotor shaft, is often seen as part of F(1). The peripheral stalk is seen as part of F(0). F(0) contains the membrane channel next to the rotor. F-type ATP synthases form dimers but each monomer functions independently in ATP generation. The dimer consists of 17 different polypeptides: ATP1 (subunit alpha, 3 molecules per monomer, part of F(1)), ATP2 (subunit beta, 3 copies per monomer, part of F(1)), ATP3 (subunit gamma, part of the central stalk), ATP4 (subunit b, part of the peripheral stalk), ATP5/OSCP (subunit 5/OSCP, part of the peripheral stalk), ATP6 (subunit a, part of the peripheral stalk), ATP7 (subunit d, part of the peripheral stalk), ATP8 (subunit 8, part of the peripheral stalk), OLI1 (subunit c, part of the rotor, 10 molecules per monomer), ATP14 (subunit h, part of the peripheral stalk), ATP15 (subunit epsilon, part of the central stalk), ATP16 (subunit delta, part of the central stalk), ATP17 (subunit f, part of the peripheral stalk), ATP18 (subunit i/j, part of the peripheral stalk), ATP19 (subunit k, dimer-specific, at interface between monomers), ATP20 (subunit g, at interface between monomers), TIM11 (subunit e, at interface between monomers).

It localises to the mitochondrion inner membrane. Its function is as follows. Mitochondrial membrane ATP synthase (F(1)F(0) ATP synthase or Complex V) produces ATP from ADP in the presence of a proton gradient across the membrane which is generated by electron transport complexes of the respiratory chain. F-type ATP synthases consist of two structural domains, F(1) - containing the extramembraneous catalytic core, and F(0) - containing the membrane proton channel, linked together by a central stalk and a peripheral stalk. During catalysis, ATP synthesis in the catalytic domain of F(1) is coupled via a rotary mechanism of the central stalk subunits to proton translocation. Part of the complex F(0) domain. Minor subunit located with subunit a/ATP6 in the membrane. This Yarrowia lipolytica (strain CLIB 122 / E 150) (Yeast) protein is ATP synthase subunit J, mitochondrial.